The primary structure comprises 1503 residues: Lysophospholipase NTE1 (1503 aa).

Topologically, residues 1-25 are cytoplasmic; sequence MDSSTAALATASAKLDAVAQQGSSS. The chain crosses the membrane as a helical span at residues 26–46; that stretch reads WIGFFANIILGIISLVYSILY. Over 47–71 the chain is Lumenal; the sequence is SVLKLTTFSIPSLLYTLFSTSLTVT. Residues 72 to 92 traverse the membrane as a helical segment; it reads MNATTLMLIIVLVFSLVSWFV. The Cytoplasmic portion of the chain corresponds to 93–1503; it reads RYRYLNMYSR…RTMAPRRASI (1411 aa). Disordered regions lie at residues 252-348, 454-561, and 722-745; these read RHGG…TTSV, TKGI…SNPF, and KNES…RFMD. 6 stretches are compositionally biased toward polar residues: residues 262–272, 285–302, 487–496, 506–542, 552–561, and 723–737; these read TSATETYTSSR, STVS…SSHG, QRPSSVTASP, KHTS…STLL, PLSQRTSNPF, and NESS…QQGS. Residues 658-777 and 821-941 each bind a nucleoside 3',5'-cyclic phosphate; these read GLPV…GYVG and RLTN…IASR. In terms of domain architecture, PNPLA spans 1200–1364; that stretch reads LVLGGGGARG…IDNLTVSHMK (165 aa). A GXGXXG motif is present at residues 1204-1209; the sequence is GGGARG. The GXSXG motif lies at 1231 to 1235; the sequence is GTSIG. S1233 functions as the Nucleophile in the catalytic mechanism. The Proton acceptor role is filled by D1351. Positions 1351–1353 match the DGA/G motif; that stretch reads DGG.

It belongs to the NTE family.

It localises to the endoplasmic reticulum membrane. The enzyme catalyses a 1-acyl-sn-glycero-3-phosphocholine + H2O = sn-glycerol 3-phosphocholine + a fatty acid + H(+). Inhibited by organophosphorus esters. Functionally, intracellular phospholipase B that catalyzes the double deacylation of phosphatidylcholine (PC) to glycerophosphocholine (GroPCho). Plays an important role in membrane lipid homeostasis. Responsible for the rapid PC turnover in response to inositol, elevated temperatures, or when choline is present in the growth medium. The chain is Lysophospholipase NTE1 (NTE1) from Pyricularia oryzae (strain 70-15 / ATCC MYA-4617 / FGSC 8958) (Rice blast fungus).